The primary structure comprises 282 residues: Glycine/sarcosine N-methyltransferase (282 aa).

Positions 1–23 (MTSTQNHPLQTQDDQQRFGQSPE) are enriched in polar residues. The interval 1–27 (MTSTQNHPLQTQDDQQRFGQSPESVRE) is disordered. Residues Y35, W43, R52, A76, D97, 123-124 (DW), and L141 each bind S-adenosyl-L-methionine. Positions 143, 176, and 217 each coordinate substrate.

The protein belongs to the class I-like SAM-binding methyltransferase superfamily. Glycine N-methyltransferase family. Monomer.

It catalyses the reaction glycine + 2 S-adenosyl-L-methionine = N,N-dimethylglycine + 2 S-adenosyl-L-homocysteine + 2 H(+). The enzyme catalyses glycine + S-adenosyl-L-methionine = sarcosine + S-adenosyl-L-homocysteine + H(+). It carries out the reaction sarcosine + S-adenosyl-L-methionine = N,N-dimethylglycine + S-adenosyl-L-homocysteine + H(+). It functions in the pathway amine and polyamine biosynthesis; betaine biosynthesis via glycine pathway; betaine from glycine: step 1/3. It participates in amine and polyamine biosynthesis; betaine biosynthesis via glycine pathway; betaine from glycine: step 2/3. Its function is as follows. Catalyzes the methylation of glycine and sarcosine to sarcosine and dimethylglycine, respectively, with S-adenosylmethionine (AdoMet) acting as the methyl donor. It has strict specificity for glycine and sarcosine as the methyl group acceptors. The chain is Glycine/sarcosine N-methyltransferase from Parasynechococcus marenigrum (strain WH8102).